Reading from the N-terminus, the 115-residue chain is Large ribosomal subunit protein bL19 (115 aa).

It belongs to the bacterial ribosomal protein bL19 family. In terms of assembly, part of the 50S ribosomal subunit.

Functionally, this protein is located at the 30S-50S ribosomal subunit interface and may play a role in the structure and function of the aminoacyl-tRNA binding site. The polypeptide is Large ribosomal subunit protein bL19 (rplS) (Bacillus subtilis (strain 168)).